Here is a 293-residue protein sequence, read N- to C-terminus: MPWIQLKLNTTGNQAESLGDVLVESGAVSVTFQDTHDNPVFEPLPGETRLWGDTDVIGLYDAETDMADVVAMLECHPQIGKGFIHKIEQLEDKDWEREWMDNFHPMRFGERLWICPSWRDVPDPTAVNVMLDPGLAFGTGTHPTTALCLQWLDSLDLNGKTLIDFGCGSGILAIAALKLGAARAIGIDIDPQAIQASRDNAQRNGVSERLELYLAKDQPAELSADVVVANILAGPLRELALLISVLPTTGGHLGLSGVLATQAAGVAQAYEDKFILDPVAEKEEWCRITGIKK.

S-adenosyl-L-methionine contacts are provided by Thr-145, Gly-166, Asp-188, and Asn-230.

It belongs to the methyltransferase superfamily. PrmA family.

Its subcellular location is the cytoplasm. The catalysed reaction is L-lysyl-[protein] + 3 S-adenosyl-L-methionine = N(6),N(6),N(6)-trimethyl-L-lysyl-[protein] + 3 S-adenosyl-L-homocysteine + 3 H(+). Functionally, methylates ribosomal protein L11. In Yersinia pseudotuberculosis serotype I (strain IP32953), this protein is Ribosomal protein L11 methyltransferase.